The sequence spans 351 residues: Phosphate acyltransferase (351 aa).

This sequence belongs to the PlsX family. As to quaternary structure, homodimer. Probably interacts with PlsY.

The protein resides in the cytoplasm. The enzyme catalyses a fatty acyl-[ACP] + phosphate = an acyl phosphate + holo-[ACP]. Its pathway is lipid metabolism; phospholipid metabolism. Catalyzes the reversible formation of acyl-phosphate (acyl-PO(4)) from acyl-[acyl-carrier-protein] (acyl-ACP). This enzyme utilizes acyl-ACP as fatty acyl donor, but not acyl-CoA. The chain is Phosphate acyltransferase from Neisseria meningitidis serogroup B (strain ATCC BAA-335 / MC58).